Here is a 463-residue protein sequence, read N- to C-terminus: Carnosine N-methyltransferase (463 aa).

2 disordered regions span residues 1-64 (MTKN…SQLK) and 79-104 (KHNH…EKEE). Residues 9 to 58 (KSNNSNISNNNNNNNNNNNNNNNNNNNNNNNNNNNNNNNNNNNNNNNNKN) show a composition bias toward low complexity. A compositionally biased stretch (basic and acidic residues) spans 79 to 93 (KHNHDHSHDHNHDYD). Positions 94-103 (DNNEDDEEKE) are enriched in acidic residues. Positions 215, 218, 260, 281, 351, 352, and 367 each coordinate S-adenosyl-L-methionine. Residue Asp-371 participates in carnosine binding. Tyr-379 is an S-adenosyl-L-methionine binding site. His-402 and Tyr-450 together coordinate carnosine.

Belongs to the carnosine N-methyltransferase family.

It carries out the reaction carnosine + S-adenosyl-L-methionine = anserine + S-adenosyl-L-homocysteine + H(+). N-methyltransferase that mediates the formation of anserine (beta-alanyl-N(Pi)-methyl-L-histidine) from carnosine. This Dictyostelium discoideum (Social amoeba) protein is Carnosine N-methyltransferase.